An 80-amino-acid chain; its full sequence is Acyl carrier protein (80 aa).

In terms of domain architecture, Carrier spans 1–79 (MTEEEIFNKI…EAVEYIKSHQ (79 aa)). The residue at position 39 (Ser39) is an O-(pantetheine 4'-phosphoryl)serine.

Belongs to the acyl carrier protein (ACP) family. 4'-phosphopantetheine is transferred from CoA to a specific serine of apo-ACP by AcpS. This modification is essential for activity because fatty acids are bound in thioester linkage to the sulfhydryl of the prosthetic group.

The protein localises to the cytoplasm. It functions in the pathway lipid metabolism; fatty acid biosynthesis. Functionally, carrier of the growing fatty acid chain in fatty acid biosynthesis. The polypeptide is Acyl carrier protein (Lactobacillus johnsonii (strain CNCM I-12250 / La1 / NCC 533)).